A 464-amino-acid polypeptide reads, in one-letter code: Glutamate--tRNA ligase (464 aa).

Positions 10 to 20 match the 'HIGH' region motif; sequence PSPTGYLHIGG. Residues 113 to 130 show a composition bias toward basic and acidic residues; it reads QEAKKEKPRYDGRWRPEA. The tract at residues 113–142 is disordered; it reads QEAKKEKPRYDGRWRPEAGKALPVPPTDVP. Residues 242-246 carry the 'KMSKS' region motif; sequence KLSKR. Lysine 245 contributes to the ATP binding site.

Belongs to the class-I aminoacyl-tRNA synthetase family. Glutamate--tRNA ligase type 1 subfamily. As to quaternary structure, monomer.

Its subcellular location is the cytoplasm. The enzyme catalyses tRNA(Glu) + L-glutamate + ATP = L-glutamyl-tRNA(Glu) + AMP + diphosphate. In terms of biological role, catalyzes the attachment of glutamate to tRNA(Glu) in a two-step reaction: glutamate is first activated by ATP to form Glu-AMP and then transferred to the acceptor end of tRNA(Glu). The chain is Glutamate--tRNA ligase from Dechloromonas aromatica (strain RCB).